The sequence spans 562 residues: NAD-dependent malic enzyme (562 aa).

Catalysis depends on Tyr-101, which acts as the Proton donor. Residue Arg-154 participates in NAD(+) binding. Residue Lys-172 is the Proton acceptor of the active site. A divalent metal cation contacts are provided by Glu-243, Asp-244, and Asp-267. Residues Asp-267 and Asn-415 each coordinate NAD(+).

Belongs to the malic enzymes family. As to quaternary structure, homotetramer. The cofactor is Mg(2+). It depends on Mn(2+) as a cofactor.

The enzyme catalyses (S)-malate + NAD(+) = pyruvate + CO2 + NADH. The catalysed reaction is oxaloacetate + H(+) = pyruvate + CO2. The sequence is that of NAD-dependent malic enzyme from Shewanella sp. (strain ANA-3).